We begin with the raw amino-acid sequence, 236 residues long: Uridylate kinase (236 aa).

Lysine 10–glycine 13 contacts ATP. Glycine 52 is a binding site for UMP. ATP is bound by residues glycine 53 and arginine 57. UMP-binding positions include aspartate 72 and threonine 133 to threonine 140. Residues threonine 160, tyrosine 166, and aspartate 169 each coordinate ATP.

It belongs to the UMP kinase family. Homohexamer.

It is found in the cytoplasm. It carries out the reaction UMP + ATP = UDP + ADP. It functions in the pathway pyrimidine metabolism; CTP biosynthesis via de novo pathway; UDP from UMP (UMPK route): step 1/1. With respect to regulation, inhibited by UTP. Catalyzes the reversible phosphorylation of UMP to UDP. This Ralstonia nicotianae (strain ATCC BAA-1114 / GMI1000) (Ralstonia solanacearum) protein is Uridylate kinase.